A 239-amino-acid chain; its full sequence is tRNA (guanine-N(1)-)-methyltransferase (239 aa).

Residues glycine 113 and 133–138 (IGDYVL) each bind S-adenosyl-L-methionine. A disordered region spans residues 218–239 (ERRPDLWAARATQNPPERKTNG).

It belongs to the RNA methyltransferase TrmD family. Homodimer.

The protein localises to the cytoplasm. The catalysed reaction is guanosine(37) in tRNA + S-adenosyl-L-methionine = N(1)-methylguanosine(37) in tRNA + S-adenosyl-L-homocysteine + H(+). Functionally, specifically methylates guanosine-37 in various tRNAs. The polypeptide is tRNA (guanine-N(1)-)-methyltransferase (Nitrobacter winogradskyi (strain ATCC 25391 / DSM 10237 / CIP 104748 / NCIMB 11846 / Nb-255)).